A 457-amino-acid polypeptide reads, in one-letter code: Acetate--CoA ligase [ADP-forming] II subunit alpha (457 aa).

The protein belongs to the acetate CoA ligase alpha subunit family. Heterotetramer of two alpha and two beta subunits.

It carries out the reaction acetate + ATP + CoA = acetyl-CoA + ADP + phosphate. Functionally, catalyzes the reversible formation of acetate and ATP from acetyl-CoA by using ADP and phosphate. Can use other substrates such as phenylacetyl-CoA, indoleacetyl-CoA and isobutyryl-CoA, but not succinyl-CoA. Seems to be involved primarily in the degradation of aryl-CoA esters to the corresponding acids. Participates in the conversion of acetyl-CoA to acetate and in the degradation of branched-chain amino acids via branched-chain-acyl-CoA esters. This Pyrococcus furiosus (strain ATCC 43587 / DSM 3638 / JCM 8422 / Vc1) protein is Acetate--CoA ligase [ADP-forming] II subunit alpha.